A 371-amino-acid chain; its full sequence is Protein arginine N-methyltransferase 1 (371 aa).

The SAM-dependent MTase PRMT-type domain occupies K50–E361. Residues H63, R72, G96, and E118 each coordinate S-adenosyl-L-methionine. R72 is an S-adenosyl-L-homocysteine binding site. Residue E118 participates in S-adenosyl-L-homocysteine binding. N6-succinyllysine is present on K134. Residue K145 forms a Glycyl lysine isopeptide (Lys-Gly) (interchain with G-Cter in ubiquitin) linkage. V146 and E147 together coordinate S-adenosyl-L-homocysteine. E147 contributes to the S-adenosyl-L-methionine binding site. Residues E162 and E171 contribute to the active site. N6-acetyllysine is present on residues K228 and K233. Residues S304 and S307 each carry the phosphoserine modification.

The protein belongs to the class I-like SAM-binding methyltransferase superfamily. Protein arginine N-methyltransferase family. In terms of assembly, homodimer. Homooctamer; individual homodimers associates to form a homooctamer. Individual homodimers can associate to form a homohexamer. Heterodimer with PRMT8. Interacts with BTG1, BTG2, NFATC2IP and IFNAR1. Interacts with and methylates CHTOP, thereby enabling the interaction of CHTOP with the 5FMC complex. Interacts with ILF3 and SUPT5H. Interacts with and methylates FOXO1, leading to the nuclear retention of FOXO1 and the stimulation of FOXO1 transcriptional activity. Methylation of FOXO1 is increased upon oxidative stress. Interacts with and probably methylates ATXN2L. Component of the methylosome, a 20S complex containing at least CLNS1A/pICln, PRMT5/SKB1, WDR77/MEP50, PRMT1 and ERH. Interacts with DHX9 (via RGG region). Interacts (via N-terminus) with HABP4. Interacts with MAP3K5/ASK1; the interaction results in MAP3K5 methylation by PRMT1 which inhibits MAP3K5 activation. Interacts with TRIM48; the interaction results in ubiquitination of PRMT1 by TRIM48, leading to PRMT1 proteasomal degradation and activation of MAP3K5. Interacts with GATOR1 complex; this interaction is S-adenosyl-L-methionine (SAM) dependent and is perturbated by SAMTOR in a SAM-sensitive manner. Interacts with GFI1; promoting recognition and binding of MRE11 and TP53BP1 substrates by PRMT1. In terms of processing, polyubiquitinated at Lys-145 by the SCF(FBXL17) complex, leading to its subsequent degradation. Ubiquitination is regulated by acetylation at Lys-228 and Lys-233. Polyubiquitinated by E3 ubiquitin-protein ligase TRIM48, leading to suppression of MAP3K5/ASK1 methylation and subsequent MAP3K5 activation. Acetylation at Lys-228 and Lys-233 regulates ubiquitination by the SCF(FBXL17) complex. Acetylated at Lys-233 by p300/EP300. Deacetylated at Lys-228 and Lys-233 by SIRT1. As to expression, widely expressed. Expressed strongly in colorectal cancer cells (at protein level). Expressed strongly in colorectal cancer tissues compared to wild-type colon samples (at protein level). Expressed strongly in colorectal cancer tissues compared to wild-type colon samples.

Its subcellular location is the nucleus. It localises to the nucleoplasm. It is found in the cytoplasm. The protein localises to the cytosol. The protein resides in the lysosome membrane. The enzyme catalyses L-arginyl-[protein] + 2 S-adenosyl-L-methionine = N(omega),N(omega)-dimethyl-L-arginyl-[protein] + 2 S-adenosyl-L-homocysteine + 2 H(+). The catalysed reaction is L-arginyl-[protein] + S-adenosyl-L-methionine = N(omega)-methyl-L-arginyl-[protein] + S-adenosyl-L-homocysteine + H(+). It catalyses the reaction N(omega)-methyl-L-arginyl-[protein] + S-adenosyl-L-methionine = N(omega),N(omega)-dimethyl-L-arginyl-[protein] + S-adenosyl-L-homocysteine + H(+). Arginine methyltransferase that methylates (mono and asymmetric dimethylation) the guanidino nitrogens of arginyl residues present in proteins such as ESR1, histone H2, H3 and H4, FMR1, ILF3, HNRNPA1, HNRNPD, NFATC2IP, SUPT5H, TAF15, EWS, HABP4, SERBP1, RBM15, FOXO1, CHTOP, MAP3K5/ASK1, MICU1 and NPRL2. Constitutes the main enzyme that mediates monomethylation and asymmetric dimethylation of histone H4 'Arg-3' (H4R3me1 and H4R3me2a, respectively), a specific tag for epigenetic transcriptional activation. May be involved in the regulation of TAF15 transcriptional activity, act as an activator of estrogen receptor (ER)-mediated transactivation, play a key role in neurite outgrowth and act as a negative regulator of megakaryocytic differentiation, by modulating p38 MAPK pathway. Methylates RBM15, promoting ubiquitination and degradation of RBM15. Methylates MRE11 and TP53BP1, promoting the DNA damage response. Methylates FOXO1 and retains it in the nucleus increasing its transcriptional activity. Methylates CHTOP and this methylation is critical for its 5-hydroxymethylcytosine (5hmC)-binding activity. Methylates MAP3K5/ASK1 at 'Arg-78' and 'Arg-80' which promotes association of MAP3K5 with thioredoxin and negatively regulates MAP3K5 association with TRAF2, inhibiting MAP3K5 stimulation and MAP3K5-induced activation of JNK. Methylates H4R3 in genes involved in glioblastomagenesis in a CHTOP- and/or TET1-dependent manner. Plays a role in regulating alternative splicing in the heart. Methylates NPRL2 at 'Arg-78' leading to inhibition of its GTPase activator activity and then the GATOR1 complex and consequently inducing timely mTORC1 activation under methionine-sufficient conditions. The protein is Protein arginine N-methyltransferase 1 of Homo sapiens (Human).